Reading from the N-terminus, the 246-residue chain is Probable transcriptional regulatory protein SPO1072 (246 aa).

The tract at residues 1–22 is disordered; that stretch reads MAGHSKWANIQHRKGRQDAARS.

It belongs to the TACO1 family.

The protein resides in the cytoplasm. The chain is Probable transcriptional regulatory protein SPO1072 from Ruegeria pomeroyi (strain ATCC 700808 / DSM 15171 / DSS-3) (Silicibacter pomeroyi).